We begin with the raw amino-acid sequence, 1066 residues long: Ubiquitin conjugation factor E4 A (1066 aa).

The interval 35–57 is disordered; it reads QLKQQSDELPASPDDSDNSVSES. Position 386 is an N6-acetyllysine (K386). Residues 987–1061 enclose the U-box domain; the sequence is DACDEFLDPI…QRWLAERKQQ (75 aa).

The protein belongs to the ubiquitin conjugation factor E4 family.

The protein localises to the cytoplasm. It catalyses the reaction S-ubiquitinyl-[E2 ubiquitin-conjugating enzyme]-L-cysteine + [acceptor protein]-L-lysine = [E2 ubiquitin-conjugating enzyme]-L-cysteine + N(6)-ubiquitinyl-[acceptor protein]-L-lysine.. Its pathway is protein modification; protein ubiquitination. In terms of biological role, ubiquitin-protein ligase that probably functions as an E3 ligase in conjunction with specific E1 and E2 ligases. May also function as an E4 ligase mediating the assembly of polyubiquitin chains on substrates ubiquitinated by another E3 ubiquitin ligase. Mediates 'Lys-48'-linked polyubiquitination of substrates. This is Ubiquitin conjugation factor E4 A from Rattus norvegicus (Rat).